A 2275-amino-acid polypeptide reads, in one-letter code: Serine-rich adhesin for platelets (2275 aa).

Residues 1-89 form the signal peptide; the sequence is MSKRQKEFHD…VNMLHDQQAF (89 aa). Residues 90 to 264 form a serine-rich repeat region 1, SRR1 region; that stretch reads AASDAPLTSE…TANTITVNKD (175 aa). Over residues 100–111 the composition is skewed to polar residues; it reads LNTQSETVGNQN. Disordered stretches follow at residues 100 to 229 and 751 to 2247; these read LNTQ…STST and NSMS…GLLG. Over residues 112–128 the composition is skewed to low complexity; sequence STTIEASTSTADSTSVT. Positions 129–140 are enriched in polar residues; sequence KNSSSVQTSNSD. Low complexity predominate over residues 150–229; it reads VTSTTNSTSN…NKTSTTSTST (80 aa). The tract at residues 265–751 is non-repeat region (NRR); the sequence is NLKQYMTTSG…TTFKYEVTRN (487 aa). Composition is skewed to low complexity over residues 752–1392 and 1402–2218; these read SMSD…LSLS and SNSA…ATSE. The interval 752–2236 is serine-rich repeat region 2, SRR2; that stretch reads SMSDSVSTSG…AQSEKRLPDT (1485 aa). Positions 2233–2237 match the LPXTG sorting signal motif; the sequence is LPDTG. Position 2236 is a pentaglycyl murein peptidoglycan amidated threonine (threonine 2236). Positions 2237–2275 are cleaved as a propeptide — removed by sortase; the sequence is GDSIKQNGLLGGVMTLLVGLGLMKRKKKKDENDQDDSQA.

This sequence belongs to the serine-rich repeat protein (SRRP) family. In terms of assembly, interacts with human gp-340 (DMBT1). Proteolytically cleaved by a metalloprotease. In terms of processing, glycosylated. It is probable that most of the Ser residues in SSR1 and SSR2 are O-GlcNAcylated. Sequential glycosylation by sugar transferases are able to generate complex sugar polymorphisms.

The protein resides in the secreted. Its subcellular location is the cell wall. Mediates binding to human platelets, possibly through a receptor-ligand interaction. Probably associated with virulence in endovascular infection. Interacts with host (human) gp-340 via the non-repeat region (NRR or binding region). Binding is inhibited by N-acetylneuraminic acid (NeuAc). This Staphylococcus aureus (strain MW2) protein is Serine-rich adhesin for platelets (sraP).